The primary structure comprises 265 residues: Eukaryotic translation initiation factor 3 subunit J (265 aa).

Composition is skewed to acidic residues over residues 1–12 (MAPERWDDEEDS) and 26–44 (DEEE…DSEV). Disordered stretches follow at residues 1–113 (MAPE…DADL) and 212–265 (TMSN…DDFM). Basic and acidic residues-rich tracts occupy residues 45–65 (EREK…EAAA) and 73–86 (RIQE…KKAE). The stretch at 61–95 (AEAAAKKKSKSQRIQEHKEERKKKAEEEDSDSEEE) forms a coiled coil. The segment covering 87-97 (EEDSDSEEEDD) has biased composition (acidic residues). The span at 216–228 (EKMREERAADKGS) shows a compositional bias: basic and acidic residues. The span at 251–265 (DYDNGDDGLGDDDFM) shows a compositional bias: acidic residues.

Belongs to the eIF-3 subunit J family. In terms of assembly, component of the eukaryotic translation initiation factor 3 (eIF-3) complex.

It is found in the cytoplasm. Functionally, component of the eukaryotic translation initiation factor 3 (eIF-3) complex, which is involved in protein synthesis of a specialized repertoire of mRNAs and, together with other initiation factors, stimulates binding of mRNA and methionyl-tRNAi to the 40S ribosome. The eIF-3 complex specifically targets and initiates translation of a subset of mRNAs involved in cell proliferation. This is Eukaryotic translation initiation factor 3 subunit J (hcr1) from Aspergillus oryzae (strain ATCC 42149 / RIB 40) (Yellow koji mold).